A 72-amino-acid polypeptide reads, in one-letter code: Large ribosomal subunit protein uL29 (72 aa).

The protein belongs to the universal ribosomal protein uL29 family.

This chain is Large ribosomal subunit protein uL29 (rpmC), found in Treponema pallidum (strain Nichols).